Here is a 675-residue protein sequence, read N- to C-terminus: Electrogenic aspartate/glutamate antiporter SLC25A13, mitochondrial (675 aa).

Alanine 2 is modified (N-acetylalanine). Residues 2–295 form a regulatory N-terminal domain region; the sequence is AAAKVALTKR…TLADIERIAP (294 aa). Over 2-331 the chain is Mitochondrial intermembrane; that stretch reads AAAKVALTKR…LLQVAESAYR (330 aa). EF-hand domains follow at residues 51 to 86, 87 to 122, 125 to 157, and 158 to 193; these read SQPNPKTVELLSGVVDQTKDGLISFQEFVAFESVLC, APDALFMVAFQLFDKAGKGEVTFEDVKQVFGQTTIH, IPFNWDSEFVQLHFGKERKRHLTYAEFTQFLLE, and IQLEHAKQAFVQRDNARTGRVTAIDFRDIMVTIRPH. Residues aspartate 66, threonine 68, aspartate 70, leucine 72, and glutamate 77 each contribute to the Ca(2+) site. Residues 296-311 are linker loop domain; it reads LEEGTLPFNLAEAQRQ. A carrier domain region spans residues 321-612; the sequence is VLLQVAESAY…LQRWFYIDFG (292 aa). Solcar repeat units follow at residues 326–418, 426–510, and 518–606; these read AESA…VRDK, VPLA…VKAS, and VSPG…LQRW. The chain crosses the membrane as a helical span at residues 332 to 349; that stretch reads FGLGSVAGAVGATAVYPI. Over 350 to 392 the chain is Mitochondrial matrix; that stretch reads DLVKTRMQNQRSTGSFVGELMYKNSFDCFKKVLRYEGFFGLYR. Residues lysine 353 and lysine 372 each carry the N6-acetyllysine modification. A helical membrane pass occupies residues 393 to 412; it reads GLLPQLLGVAPEKAIKLTVN. The Mitochondrial intermembrane segment spans residues 413–435; that stretch reads DFVRDKFMHKDGSVPLAAEILAG. Residues 436-449 form a helical membrane-spanning segment; sequence GCAGGSQVIFTNPL. The Mitochondrial matrix segment spans residues 450–484; the sequence is EIVKIRLQVAGEITTGPRVSALSVVRDLGFFGIYK. An N6-methyllysine modification is found at lysine 453. At lysine 484 the chain carries N6-acetyllysine; alternate. Lysine 484 bears the N6-succinyllysine; alternate mark. A helical transmembrane segment spans residues 485–504; it reads GAKACFLRDIPFSAIYFPCY. Residues 505-523 lie on the Mitochondrial intermembrane side of the membrane; sequence AHVKASFANEDGQVSPGSL. The helical transmembrane segment at 524-541 threads the bilayer; that stretch reads LLAGAIAGMPAASLVTPA. Residues 542–580 lie on the Mitochondrial matrix side of the membrane; sequence DVIKTRLQVAARAGQTTYSGVIDCFRKILREEGPKALWK. An N6-succinyllysine modification is found at lysine 580. Residues 581–600 traverse the membrane as a helical segment; that stretch reads GAGARVFRSSPQFGVTLLTY. Residues 601 to 675 are Mitochondrial intermembrane-facing; it reads ELLQRWFYID…STSKAIGGGP (75 aa). The interval 613–675 is C-terminal domain; sequence GVKPMGSEPV…STSKAIGGGP (63 aa). Lysine 662 carries the post-translational modification N6-acetyllysine. Serine 666 bears the Phosphoserine mark.

The protein belongs to the mitochondrial carrier (TC 2.A.29) family. As to quaternary structure, homodimer (via N-terminus). High levels in liver and low levels in kidney, pancreas, placenta, heart and brain.

It is found in the mitochondrion inner membrane. The enzyme catalyses L-aspartate(in) + L-glutamate(out) + H(+)(out) = L-aspartate(out) + L-glutamate(in) + H(+)(in). The catalysed reaction is 3-sulfino-L-alanine(out) + L-glutamate(in) + H(+)(in) = 3-sulfino-L-alanine(in) + L-glutamate(out) + H(+)(out). It catalyses the reaction 3-sulfino-L-alanine(out) + L-aspartate(in) = 3-sulfino-L-alanine(in) + L-aspartate(out). Its activity is regulated as follows. Activated by calcium-binding in the mitochondrial intermembrane space. Inhibited by pyridoxal 5'-phosphate, bathophenathroline, mercurials, diethyl pyrocarbonate and N-ethylmaleimide. Its function is as follows. Mitochondrial electrogenic aspartate/glutamate antiporter that favors efflux of aspartate and entry of glutamate and proton within the mitochondria as part of the malate-aspartate shuttle. Also mediates the uptake of L-cysteinesulfinate (3-sulfino-L-alanine) by mitochondria in exchange of L-glutamate and proton. Can also exchange L-cysteinesulfinate with aspartate in their anionic form without any proton translocation. Lacks transport activity towards gamma-aminobutyric acid (GABA). The sequence is that of Electrogenic aspartate/glutamate antiporter SLC25A13, mitochondrial from Homo sapiens (Human).